The chain runs to 471 residues: Alpha-amylase (471 aa).

Pyrrolidone carboxylic acid is present on Gln1. A disulfide bridge links Cys28 with Cys84. Residues Asn98, Arg146, and Asp155 each contribute to the Ca(2+) site. A disulfide bridge connects residues Cys134 and Cys148. Position 183 (Arg183) interacts with chloride. Asp185 functions as the Nucleophile in the catalytic mechanism. Residue His189 participates in Ca(2+) binding. Glu222 serves as the catalytic Proton donor. The chloride site is built by Asn285 and Arg321. Positions 326 to 343 (FDFTDNDQGPPQDGSGNL) are enriched in polar residues. Residues 326–346 (FDFTDNDQGPPQDGSGNLISP) are disordered. 2 disulfides stabilise this stretch: Cys354–Cys360 and Cys425–Cys437.

Belongs to the glycosyl hydrolase 13 family. In terms of assembly, monomer. Requires Ca(2+) as cofactor. The cofactor is chloride.

The catalysed reaction is Endohydrolysis of (1-&gt;4)-alpha-D-glucosidic linkages in polysaccharides containing three or more (1-&gt;4)-alpha-linked D-glucose units.. The polypeptide is Alpha-amylase (Tenebrio molitor (Yellow mealworm beetle)).